Here is a 285-residue protein sequence, read N- to C-terminus: Catechol-2,3-dioxygenase (285 aa).

2 consecutive VOC domains span residues 9 to 126 and 169 to 285; these read HIGY…MYAD and IIGH…TFVI. 2 residues coordinate Fe cation: His-213 and Glu-264.

It belongs to the extradiol ring-cleavage dioxygenase family. Fe(2+) serves as cofactor.

The catalysed reaction is catechol + O2 = (2Z,4E)-2-hydroxy-6-oxohexa-2,4-dienoate + H(+). Functionally, involved in the meta cleavage of catechol to 2-hydroxymuconic semialdehyde. Essential for growth and viability in the presence of catechol and probably involved in the detoxification of catechol. The polypeptide is Catechol-2,3-dioxygenase (catE) (Bacillus subtilis (strain 168)).